A 617-amino-acid chain; its full sequence is MNNVISFIGNSSNKYFQINQLHFIRIINKNIHSKNNLINSNSSYNVFYNKYFIKNTFQNKNKLSSIYSKLNFSIKNMCKDKNEKKNYEHVNANEKNGYLASEKNELTKNKVEEHTYDYDYVVIGGGPGGMASAKEAAAHGARVLLFDYVKPSSQGTKWGIGGTCVNVGCVPKKLMHYAGHMGSIFKLDSKAYGWKFDNLKHDWKKLVTTVQSHIRSLNFSYMTGLRSSKVKYINGLAKLKDKNTVSYYLKGDLSKEETVTGKYILIATGCRPHIPDDVEGAKELSITSDDIFSLKKDPGKTLVVGASYVALECSGFLNSLGYDVTVAVRSIVLRGFDQQCAVKVKLYMEEQGVMFKNGILPKKLTKMDDKILVEFSDKTSELYDTVLYAIGRKGDIDGLNLESLNMNVNKSNNKIIADHLSCTNIPSIFAVGDVAENVPELAPVAIKAGEILARRLFKDSDEIMDYSYIPTSIYTPIEYGACGYSEEKAYELYGKSNVEVFLQEFNNLEISAVHRQKHIRAQKDEYDLDVSSTCLAKLVCLKNEDNRVIGFHYVGPNAGEVTQGMALALRLKVKKKDFDNCIGIHPTDAESFMNLFVTISSGLSYAAKGGCGGGKCG.

FAD-binding positions include 127–128 (PG), 147–150 (DYVK), 163–164 (TC), 168–172 (GCVPK), Ala-237, Asp-433, and 440–442 (ELA). Cys-164 and Cys-169 are oxidised to a cystine. A loop important for the interaction with TRX1 region spans residues 514-528 (HRQKHIRAQKDEYDL). His-585 is a binding site for FAD. His-585 (proton acceptor) is an active-site residue. Cys-611 and Cys-616 are disulfide-bonded.

It belongs to the class-I pyridine nucleotide-disulfide oxidoreductase family. As to quaternary structure, homodimer. FAD serves as cofactor.

It localises to the mitochondrion. It is found in the cytoplasm. The catalysed reaction is [thioredoxin]-dithiol + NADP(+) = [thioredoxin]-disulfide + NADPH + H(+). In terms of biological role, catalyzes the transfer of electrons from NADPH to thioredoxins TRX1, TRX2 and TRX3, which in turn act as reductants of disulfide containing proteins. Able to reduce nitroglutathione (GSNO), a compound involved in the transport of nitric oxide (NO); however, TRX1 is more efficient in reducing GSNO. Has no catalytic activity towards oxidized glutathione (GSSG). The protein is Thioredoxin reductase of Plasmodium falciparum (isolate 3D7).